Here is a 117-residue protein sequence, read N- to C-terminus: Large ribosomal subunit protein uL18 (117 aa).

It belongs to the universal ribosomal protein uL18 family. As to quaternary structure, part of the 50S ribosomal subunit; part of the 5S rRNA/L5/L18/L25 subcomplex. Contacts the 5S and 23S rRNAs.

This is one of the proteins that bind and probably mediate the attachment of the 5S RNA into the large ribosomal subunit, where it forms part of the central protuberance. The protein is Large ribosomal subunit protein uL18 of Colwellia psychrerythraea (strain 34H / ATCC BAA-681) (Vibrio psychroerythus).